Here is a 136-residue protein sequence, read N- to C-terminus: Aspartate 1-decarboxylase (136 aa).

Residue Ser25 is the Schiff-base intermediate with substrate; via pyruvic acid of the active site. Ser25 carries the post-translational modification Pyruvic acid (Ser). Position 57 (Thr57) interacts with substrate. Tyr58 serves as the catalytic Proton donor. Residue Gly73–Ala75 participates in substrate binding.

It belongs to the PanD family. As to quaternary structure, heterooctamer of four alpha and four beta subunits. Requires pyruvate as cofactor. Post-translationally, is synthesized initially as an inactive proenzyme, which is activated by self-cleavage at a specific serine bond to produce a beta-subunit with a hydroxyl group at its C-terminus and an alpha-subunit with a pyruvoyl group at its N-terminus.

The protein resides in the cytoplasm. The catalysed reaction is L-aspartate + H(+) = beta-alanine + CO2. Its pathway is cofactor biosynthesis; (R)-pantothenate biosynthesis; beta-alanine from L-aspartate: step 1/1. Catalyzes the pyruvoyl-dependent decarboxylation of aspartate to produce beta-alanine. In Acidothermus cellulolyticus (strain ATCC 43068 / DSM 8971 / 11B), this protein is Aspartate 1-decarboxylase.